Reading from the N-terminus, the 209-residue chain is dITP/XTP pyrophosphatase (209 aa).

Residue 7-12 participates in substrate binding; the sequence is SSHGYK. The active-site Proton acceptor is aspartate 70. Aspartate 70 lines the Mg(2+) pocket. Residues serine 71, 154 to 157, lysine 177, and 182 to 183 contribute to the substrate site; these read FGYD and HR.

The protein belongs to the HAM1 NTPase family. As to quaternary structure, homodimer. It depends on Mg(2+) as a cofactor.

It catalyses the reaction XTP + H2O = XMP + diphosphate + H(+). The enzyme catalyses dITP + H2O = dIMP + diphosphate + H(+). It carries out the reaction ITP + H2O = IMP + diphosphate + H(+). Functionally, pyrophosphatase that catalyzes the hydrolysis of nucleoside triphosphates to their monophosphate derivatives, with a high preference for the non-canonical purine nucleotides XTP (xanthosine triphosphate), dITP (deoxyinosine triphosphate) and ITP. Seems to function as a house-cleaning enzyme that removes non-canonical purine nucleotides from the nucleotide pool, thus preventing their incorporation into DNA/RNA and avoiding chromosomal lesions. This is dITP/XTP pyrophosphatase from Chlamydia muridarum (strain MoPn / Nigg).